The chain runs to 473 residues: ATP synthase subunit beta 2 (473 aa).

Position 158–165 (158–165 (GGAGVGKT)) interacts with ATP.

The protein belongs to the ATPase alpha/beta chains family. F-type ATPases have 2 components, CF(1) - the catalytic core - and CF(0) - the membrane proton channel. CF(1) has five subunits: alpha(3), beta(3), gamma(1), delta(1), epsilon(1). CF(0) has three main subunits: a(1), b(2) and c(9-12). The alpha and beta chains form an alternating ring which encloses part of the gamma chain. CF(1) is attached to CF(0) by a central stalk formed by the gamma and epsilon chains, while a peripheral stalk is formed by the delta and b chains.

It is found in the cell membrane. It carries out the reaction ATP + H2O + 4 H(+)(in) = ADP + phosphate + 5 H(+)(out). Its function is as follows. Produces ATP from ADP in the presence of a proton gradient across the membrane. The catalytic sites are hosted primarily by the beta subunits. The protein is ATP synthase subunit beta 2 of Listeria welshimeri serovar 6b (strain ATCC 35897 / DSM 20650 / CCUG 15529 / CIP 8149 / NCTC 11857 / SLCC 5334 / V8).